Reading from the N-terminus, the 245-residue chain is Alpha carbonic anhydrase 2 (245 aa).

The N-terminal stretch at 1 to 23 (MDKISIRCFIFLVLTSFVTTVSC) is a signal peptide. Residues 37–245 (HEFSYEWNQE…THRYFLLFFT (209 aa)) enclose the Alpha-carbonic anhydrase domain. Cysteines 62 and 222 form a disulfide. Residue Asn-95 is glycosylated (N-linked (GlcNAc...) asparagine). Residue His-103 is the Proton acceptor of the active site. Asn-120 carries an N-linked (GlcNAc...) asparagine glycan. The Zn(2+) site is built by His-130, His-132, and His-149. Asn-156 carries an N-linked (GlcNAc...) asparagine glycan. Residue 218–219 (TT) participates in substrate binding.

Belongs to the alpha-class carbonic anhydrase family. It depends on Zn(2+) as a cofactor. Post-translationally, N-glycosylated. As to expression, expressed in stems and roots.

The protein localises to the plastid. It localises to the chloroplast stroma. It carries out the reaction hydrogencarbonate + H(+) = CO2 + H2O. In terms of biological role, reversible hydration of carbon dioxide. This chain is Alpha carbonic anhydrase 2 (ACA2), found in Arabidopsis thaliana (Mouse-ear cress).